The chain runs to 465 residues: MGSKTPHNHRRGPNESSSPPAIDAINPPKQAAASGLVHGSLEGESEGGEDEDDDKPGADLKAVGQIGNDGQKRNKRKKKKKKKNTKELEILQTTPPRVALANIFRSQRYPEAEIVKYSTDNDNLQRTTTEELRHLSVLNAMDDEFLNDYRKAAEVHRQVRQYVQTIIKPGIALSQLAPEIEDGVRALTNHQGLETGDALKAGMAFPTGLCLNNIAAHWTPNPGAKEVILQYDDVLKIDFGVHVNGRIVDSAFTMAFNPVYDNLLAAVKDATNAGLKEAGIDSRIAHISEAIQEVMESYEVELNRKVIPVKAVRNITGHNILHYKIHGDKQVPFVKTQTNQRMEEGDVFAIETFGSTGKAYLDDATGIYGYGYDENSSTTGLHHSSAKSLLKTIKENFGTLVFSRRYLERLGVQRYHLGMRSLVTNGIVQSYAPLVDVPGSYVAQFEHTVLLRPNCKEVISRGDDY.

Residues 1-11 (MGSKTPHNHRR) show a composition bias toward basic residues. The segment at 1–89 (MGSKTPHNHR…KKKKNTKELE (89 aa)) is disordered. Residues 43–54 (GESEGGEDEDDD) show a composition bias toward acidic residues. The segment covering 73–84 (RNKRKKKKKKKN) has biased composition (basic residues). Residue H217 participates in substrate binding. Positions 238, 249, and 318 each coordinate a divalent metal cation. H326 provides a ligand contact to substrate. E351 and E446 together coordinate a divalent metal cation.

Belongs to the peptidase M24A family. Methionine aminopeptidase eukaryotic type 2 subfamily. Co(2+) is required as a cofactor. It depends on Zn(2+) as a cofactor. The cofactor is Mn(2+). Fe(2+) serves as cofactor.

It is found in the cytoplasm. The enzyme catalyses Release of N-terminal amino acids, preferentially methionine, from peptides and arylamides.. Its function is as follows. Cotranslationally removes the N-terminal methionine from nascent proteins. The N-terminal methionine is often cleaved when the second residue in the primary sequence is small and uncharged (Met-Ala-, Cys, Gly, Pro, Ser, Thr, or Val). The sequence is that of Methionine aminopeptidase 2-2 from Ajellomyces capsulatus (strain G186AR / H82 / ATCC MYA-2454 / RMSCC 2432) (Darling's disease fungus).